The chain runs to 148 residues: Putative pre-16S rRNA nuclease (148 aa).

Belongs to the YqgF nuclease family.

Its subcellular location is the cytoplasm. Could be a nuclease involved in processing of the 5'-end of pre-16S rRNA. This chain is Putative pre-16S rRNA nuclease, found in Nitrosomonas europaea (strain ATCC 19718 / CIP 103999 / KCTC 2705 / NBRC 14298).